Consider the following 314-residue polypeptide: tRNA(Ile)-lysidine synthase, chloroplastic (314 aa).

31-36 (SGGQDS) is an ATP binding site.

The protein belongs to the tRNA(Ile)-lysidine synthase family.

The protein resides in the plastid. The protein localises to the chloroplast. It carries out the reaction cytidine(34) in tRNA(Ile2) + L-lysine + ATP = lysidine(34) in tRNA(Ile2) + AMP + diphosphate + H(+). In terms of biological role, ligates lysine onto the cytidine present at position 34 of the AUA codon-specific tRNA(Ile) that contains the anticodon CAU, in an ATP-dependent manner. Cytidine is converted to lysidine, thus changing the amino acid specificity of the tRNA from methionine to isoleucine. The sequence is that of tRNA(Ile)-lysidine synthase, chloroplastic from Cyanidium caldarium (Red alga).